A 1496-amino-acid polypeptide reads, in one-letter code: Rap guanine nucleotide exchange factor 2 (1496 aa).

2 disordered regions span residues 40–59 (HVSS…SSSL) and 68–101 (SEAG…SDPL). A compositionally biased stretch (acidic residues) spans 83–94 (VDSEDDDDEEDI). 135 to 254 (AFANMTMSVR…VEEEGEIVMV (120 aa)) contributes to the a nucleoside 3',5'-cyclic phosphate binding site. Positions 267–380 (KGHIVIKGTS…RLLNIACAAK (114 aa)) constitute an N-terminal Ras-GEF domain. The 86-residue stretch at 385–470 (LMTLTKPSRE…ITVKTNLFVF (86 aa)) folds into the PDZ domain. Position 501 is a phosphoserine (serine 501). Residues 606 to 692 (PDQVLRVFKA…GRYYLKNNME (87 aa)) form the Ras-associating domain. Threonine 644 bears the Phosphothreonine; by PLK2 mark. The Ras-GEF domain maps to 717-944 (STVEVATQLS…SQGSANATVL (228 aa)). Serine 806 carries the phosphoserine; by PLK2 modification. Serine 930 carries the phosphoserine modification. Residues serine 933 and serine 1022 each carry the phosphoserine; by PLK2 modification. A disordered region spans residues 1002-1051 (PATSTLPKNPGDKKPVKSETSPVAPRAGPQQKVQPQQPLAQPQPPHKVSQ). Over residues 1030–1041 (PQQKVQPQQPLA) the composition is skewed to low complexity. Phosphoserine is present on residues serine 1079, serine 1088, serine 1094, serine 1115, serine 1119, and serine 1158. Residues 1093–1159 (GSLERHRKQA…RSSIVSNSSF (67 aa)) are disordered. Composition is skewed to low complexity over residues 1110-1124 (SSQL…QSSP) and 1140-1159 (SDSG…NSSF). Serine 1175 carries the post-translational modification Phosphoserine; by PLK2. 3 disordered regions span residues 1224–1256 (STEE…SGSH), 1303–1369 (STKY…EEAK), and 1390–1496 (RKEG…VSAV). The segment covering 1227-1237 (ELSHDQGDRAS) has biased composition (basic and acidic residues). 2 stretches are compositionally biased toward polar residues: residues 1246-1256 (GSWTSCSSGSH) and 1306-1330 (YNRQ…SSTG). Low complexity predominate over residues 1440–1455 (PTEAPAPGQTPPAAAA). Acidic residues predominate over residues 1485 to 1496 (AEEDEDEQVSAV).

Belongs to the RAPGEF2 family. As to quaternary structure, found in a complex, at least composed of KIDINS220, MAGI2, NTRK1 and RAPGEF2; the complex is mainly formed at late endosomes in a neuronal growth factor (NGF)-dependent manner. Interacts (via C-terminal domain) with NEDD4 (via WW domains); this interaction leads to ubiquitination and degradation via the proteasome pathway in a cAMP-independent manner. Interacts with MAGI1 (via PDZ domain). Interacts with ADRB1 (via C-terminal PDZ motif); the interaction is direct. Interacts (via Ras-associating domain) with RAP1A (via GTP-bound active form). Interacts weakly with HRAS (via GDP- and GTP-bound forms). Interacts (via C-terminal domain) with MAGI2 (via PDZ and WW domains). Interacts with CDH1, CTNNB1 and TJP1. In terms of processing, ubiquitinated by NEDD4, leading to proteasomal degradation. Post-translationally, phosphorylation by PLK2 promotes its activity. In terms of tissue distribution, expressed in all layers of the cerebral cortex, hippocampus and cerebellum. Expressed in the cortical plate, cingulate cortex and the subventricular zone. Expressed in neurons and endocrine cells (at protein level). Expressed in melanoma cells.

It is found in the cytoplasm. It localises to the perinuclear region. The protein localises to the cell membrane. The protein resides in the late endosome. Its subcellular location is the cell junction. In terms of biological role, functions as a guanine nucleotide exchange factor (GEF), which activates Rap and Ras family of small GTPases by exchanging bound GDP for free GTP in a cAMP-dependent manner. Serves as a link between cell surface receptors and Rap/Ras GTPases in intracellular signaling cascades. Also acts as an effector for Rap1 by direct association with Rap1-GTP thereby leading to the amplification of Rap1-mediated signaling. Shows weak activity on HRAS. It is controversial whether RAPGEF2 binds cAMP and cGMP or not. Its binding to ligand-activated beta-1 adrenergic receptor ADRB1 leads to the Ras activation through the G(s)-alpha signaling pathway. Involved in the cAMP-induced Ras and Erk1/2 signaling pathway that leads to sustained inhibition of long term melanogenesis by reducing dendrite extension and melanin synthesis. Also provides inhibitory signals for cell proliferation of melanoma cells and promotes their apoptosis in a cAMP-independent nanner. Regulates cAMP-induced neuritogenesis by mediating the Rap1/B-Raf/ERK signaling through a pathway that is independent on both PKA and RAPGEF3/RAPGEF4. Involved in neuron migration and in the formation of the major forebrain fiber connections forming the corpus callosum, the anterior commissure and the hippocampal commissure during brain development. Involved in neuronal growth factor (NGF)-induced sustained activation of Rap1 at late endosomes and in brain-derived neurotrophic factor (BDNF)-induced axon outgrowth of hippocampal neurons. Plays a role in the regulation of embryonic blood vessel formation and in the establishment of basal junction integrity and endothelial barrier function. May be involved in the regulation of the vascular endothelial growth factor receptor KDR and cadherin CDH5 expression at allantois endothelial cell-cell junctions. This is Rap guanine nucleotide exchange factor 2 (Rapgef2) from Mus musculus (Mouse).